The following is a 496-amino-acid chain: Alanine aminotransferase 1 (496 aa).

Ala-2 carries the N-acetylalanine modification. Thr-22 bears the Phosphothreonine mark. Lys-314 bears the N6-(pyridoxal phosphate)lysine mark.

This sequence belongs to the class-I pyridoxal-phosphate-dependent aminotransferase family. Alanine aminotransferase subfamily. Homodimer. Pyridoxal 5'-phosphate is required as a cofactor. As to expression, liver, heart, skeletal muscle, etc.

The protein localises to the cytoplasm. The enzyme catalyses L-alanine + 2-oxoglutarate = pyruvate + L-glutamate. The protein operates within amino-acid degradation; L-alanine degradation via transaminase pathway; pyruvate from L-alanine: step 1/1. Its function is as follows. Catalyzes the reversible transamination between alanine and 2-oxoglutarate to form pyruvate and glutamate. Participates in cellular nitrogen metabolism and also in liver gluconeogenesis starting with precursors transported from skeletal muscles. This chain is Alanine aminotransferase 1 (Gpt), found in Rattus norvegicus (Rat).